A 121-amino-acid chain; its full sequence is Cu-Zn superoxide dismutase-like protein (121 aa).

C48 and C98 are oxidised to a cystine.

This sequence belongs to the Cu-Zn superoxide dismutase family.

The protein localises to the host cytoplasm. Its function is as follows. Virion protein with no enzymatic activity. The chain is Cu-Zn superoxide dismutase-like protein from Vaccinia virus (strain Ankara) (VACV).